We begin with the raw amino-acid sequence, 244 residues long: Protein pendolino (244 aa).

The UBC core domain maps to Gln20–Glu176.

The protein belongs to the ubiquitin-conjugating enzyme family. FTS subfamily. In terms of assembly, interacts (via N-terminus) with cav/HOAP (via N-terminus); the interaction is direct. Probably interacts (via N-terminus and UBC domain) with ver and moi.

It is found in the nucleus. It localises to the nucleolus. The protein resides in the chromosome. Its function is as follows. Required for efficient DNA replication, probably through involvement in telomere replication. May have a role in telomere capping of heterochromatic chromosome ends. This Drosophila melanogaster (Fruit fly) protein is Protein pendolino.